Reading from the N-terminus, the 55-residue chain is MPQLNPSPWLLILLFSWLIFLTMLPSKTQLHTFPNMPSTQNMCKQEPEPWTWPWA.

A helical membrane pass occupies residues 4–24 (LNPSPWLLILLFSWLIFLTML). The segment at 36–55 (MPSTQNMCKQEPEPWTWPWA) is disordered.

It belongs to the ATPase protein 8 family. Component of the ATP synthase complex composed at least of ATP5F1A/subunit alpha, ATP5F1B/subunit beta, ATP5MC1/subunit c (homooctomer), MT-ATP6/subunit a, MT-ATP8/subunit 8, ATP5ME/subunit e, ATP5MF/subunit f, ATP5MG/subunit g, ATP5MK/subunit k, ATP5MJ/subunit j, ATP5F1C/subunit gamma, ATP5F1D/subunit delta, ATP5F1E/subunit epsilon, ATP5PF/subunit F6, ATP5PB/subunit b, ATP5PD/subunit d, ATP5PO/subunit OSCP. ATP synthase complex consists of a soluble F(1) head domain (subunits alpha(3) and beta(3)) - the catalytic core - and a membrane F(0) domain - the membrane proton channel (subunits c, a, 8, e, f, g, k and j). These two domains are linked by a central stalk (subunits gamma, delta, and epsilon) rotating inside the F1 region and a stationary peripheral stalk (subunits F6, b, d, and OSCP).

It localises to the mitochondrion membrane. In terms of biological role, subunit 8, of the mitochondrial membrane ATP synthase complex (F(1)F(0) ATP synthase or Complex V) that produces ATP from ADP in the presence of a proton gradient across the membrane which is generated by electron transport complexes of the respiratory chain. ATP synthase complex consist of a soluble F(1) head domain - the catalytic core - and a membrane F(1) domain - the membrane proton channel. These two domains are linked by a central stalk rotating inside the F(1) region and a stationary peripheral stalk. During catalysis, ATP synthesis in the catalytic domain of F(1) is coupled via a rotary mechanism of the central stalk subunits to proton translocation. In vivo, can only synthesize ATP although its ATP hydrolase activity can be activated artificially in vitro. Part of the complex F(0) domain. This chain is ATP synthase F(0) complex subunit 8, found in Latimeria chalumnae (Coelacanth).